A 179-amino-acid chain; its full sequence is MAKLHDYYKDEVVKKLMTEFNYNSVMQVPRVEKITLNMGVGEAIADKKLLDNAAADLTAISGQKPLITKARKSVAGFKIRQGYPIGCKVTLRGERMWEFLERLISIAVPRIRDFRGLSAKSFDGRGNYSMGVREQIIFPEIDYDKVDRVRGLDITITTTAKSDDEGRALLAAFNFPFRK.

It belongs to the universal ribosomal protein uL5 family. Part of the 50S ribosomal subunit; part of the 5S rRNA/L5/L18/L25 subcomplex. Contacts the 5S rRNA and the P site tRNA. Forms a bridge to the 30S subunit in the 70S ribosome.

Its function is as follows. This is one of the proteins that bind and probably mediate the attachment of the 5S RNA into the large ribosomal subunit, where it forms part of the central protuberance. In the 70S ribosome it contacts protein S13 of the 30S subunit (bridge B1b), connecting the 2 subunits; this bridge is implicated in subunit movement. Contacts the P site tRNA; the 5S rRNA and some of its associated proteins might help stabilize positioning of ribosome-bound tRNAs. The chain is Large ribosomal subunit protein uL5 from Pectobacterium atrosepticum (strain SCRI 1043 / ATCC BAA-672) (Erwinia carotovora subsp. atroseptica).